Here is a 181-residue protein sequence, read N- to C-terminus: ATP-dependent protease subunit HslV (181 aa).

Residue threonine 9 is part of the active site. Residues glycine 164, cysteine 167, and threonine 170 each contribute to the Na(+) site.

It belongs to the peptidase T1B family. HslV subfamily. In terms of assembly, a double ring-shaped homohexamer of HslV is capped on each side by a ring-shaped HslU homohexamer. The assembly of the HslU/HslV complex is dependent on binding of ATP.

The protein localises to the cytoplasm. It catalyses the reaction ATP-dependent cleavage of peptide bonds with broad specificity.. Its activity is regulated as follows. Allosterically activated by HslU binding. Functionally, protease subunit of a proteasome-like degradation complex believed to be a general protein degrading machinery. This is ATP-dependent protease subunit HslV from Gemmatimonas aurantiaca (strain DSM 14586 / JCM 11422 / NBRC 100505 / T-27).